The primary structure comprises 420 residues: Vacuolar amino acid transporter 5 (420 aa).

At 1-19 (MSGYSPLSSGPADVHIGKA) the chain is on the cytoplasmic side. Residues 20–40 (GFFSSVINLANTILGAGILSL) traverse the membrane as a helical segment. The Vacuolar portion of the chain corresponds to 41-49 (PNAFTKTGL). A helical transmembrane segment spans residues 50 to 70 (LFGCLTIVFSAFASFLGLYFV). The Cytoplasmic segment spans residues 71-96 (SQCAARLPRGKASFAAVAKHTFPSLA). Residues 97-117 (VVFDASIAVKCFGVAVSYLVI) traverse the membrane as a helical segment. At 118–141 (VGDLMPQIAPSLGLSSPMFLRRQT) the chain is on the vacuolar side. A helical transmembrane segment spans residues 142-162 (WIVFALFVLTPLSFLKRLDSL). Topologically, residues 163–166 (RHTS) are cytoplasmic. Residues 167–187 (VISLIALCYLVFIVLYHFIIG) form a helical membrane-spanning segment. The Vacuolar portion of the chain corresponds to 188–195 (DTVKGEIR). Residues 196-216 (YFVPESGFGYLSVLPVFVFGF) traverse the membrane as a helical segment. The Cytoplasmic portion of the chain corresponds to 217–240 (TCHQNAFSVINEVRNFSQGFVNFT). The helical transmembrane segment at 241 to 261 (MFTAIISSTLLYLLVAITGYL) threads the bilayer. The Vacuolar segment spans residues 262–278 (SFGSLASGNIIAMYDNT). A helical membrane pass occupies residues 279–299 (SIWIIGGKLAIVVLVLFSYPL). Topologically, residues 300 to 326 (QCHPCRNSVYQAIRRSYSAHDMSDGYH) are cytoplasmic. Residues 327–347 (AVITLCILLFTHSLALLLSSL) form a helical membrane-spanning segment. The Vacuolar segment spans residues 348–349 (EM). The helical transmembrane segment at 350-370 (VLAFVGSTGSTFISFILPGSL) threads the bilayer. Residues 371–394 (YYFFSHKVASPGNSSPLQLRISRA) are Cytoplasmic-facing. Residues 395–415 (FAAGLAIYGTVVMILCLNINI) form a helical membrane-spanning segment. The Vacuolar portion of the chain corresponds to 416 to 420 (AKLSH).

This sequence belongs to the amino acid/polyamine transporter 2 family.

It localises to the vacuole membrane. In terms of biological role, vacuolar amino acid transporter involved in the vacuolar uptake of histidine, glutamate, tyrosine, arginine, lysine, and serine. Required for sporulation. This Schizosaccharomyces pombe (strain 972 / ATCC 24843) (Fission yeast) protein is Vacuolar amino acid transporter 5 (avt5).